Here is a 338-residue protein sequence, read N- to C-terminus: Fructose-1,6-bisphosphatase class 1 1 (338 aa).

Mg(2+)-binding residues include glutamate 94, aspartate 116, leucine 118, and aspartate 119. Substrate contacts are provided by residues 119 to 122 (DGSS), asparagine 210, and lysine 276. Glutamate 282 lines the Mg(2+) pocket.

Belongs to the FBPase class 1 family. As to quaternary structure, homotetramer. Mg(2+) is required as a cofactor.

Its subcellular location is the cytoplasm. The catalysed reaction is beta-D-fructose 1,6-bisphosphate + H2O = beta-D-fructose 6-phosphate + phosphate. It functions in the pathway carbohydrate biosynthesis; gluconeogenesis. In Paraburkholderia phymatum (strain DSM 17167 / CIP 108236 / LMG 21445 / STM815) (Burkholderia phymatum), this protein is Fructose-1,6-bisphosphatase class 1 1.